Here is a 556-residue protein sequence, read N- to C-terminus: Capsid vertex component 2 (556 aa).

Residues 1-54 (MWPVGSSYTRACSVQRWPKRCVYWAPSPQNVLEINPHRFQESRRSAALYRKHVV) form an interaction with major capsid protein/MCP region. The interval 104 to 136 (QPASSNQGGARPQTDPHVPQPAPAIPSAPPKEN) is disordered. The span at 121 to 132 (VPQPAPAIPSAP) shows a compositional bias: pro residues.

This sequence belongs to the herpesviridae CVC2 protein family. As to quaternary structure, heterodimerizes with CVC1. Interacts with major capsid protein/MCP and triplex capsid protein 1/TRX1 at the pentamer vertices. Interacts with the large tegument protein/LTP.

Its subcellular location is the virion. It localises to the host nucleus. In terms of biological role, capsid vertex-specific component that plays a role during viral DNA encapsidation, assuring correct genome cleavage and presumably stabilizing capsids that contain full-length viral genomes. Participates in the interaction between the capsid and the tegument through interaction with the large tegument protein/LTP. In Connochaetes taurinus (Blue wildebeest), this protein is Capsid vertex component 2.